Reading from the N-terminus, the 273-residue chain is Bis(5'-nucleosyl)-tetraphosphatase, symmetrical (273 aa).

It belongs to the Ap4A hydrolase family.

It carries out the reaction P(1),P(4)-bis(5'-adenosyl) tetraphosphate + H2O = 2 ADP + 2 H(+). Hydrolyzes diadenosine 5',5'''-P1,P4-tetraphosphate to yield ADP. This chain is Bis(5'-nucleosyl)-tetraphosphatase, symmetrical, found in Aromatoleum aromaticum (strain DSM 19018 / LMG 30748 / EbN1) (Azoarcus sp. (strain EbN1)).